The sequence spans 435 residues: Eukaryotic translation initiation factor 3 subunit E (435 aa).

The 174-residue stretch at 219–392 (FFNHPKGRDL…GHVVMGTQPL (174 aa)) folds into the PCI domain.

The protein belongs to the eIF-3 subunit E family. As to quaternary structure, component of the eukaryotic translation initiation factor 3 (eIF-3) complex. The eIF-3 complex interacts with pix. Interacts with mxt. As to expression, expression levels in females and males are relatively similar 10 days after oviposition, however by day 15 expression is higher in gravid females than in males (at protein level).

It localises to the cytoplasm. It is found in the microsome. The protein localises to the endoplasmic reticulum. Functionally, component of the eukaryotic translation initiation factor 3 (eIF-3) complex, which is involved in protein synthesis of a specialized repertoire of mRNAs and, together with other initiation factors, stimulates binding of mRNA and methionyl-tRNAi to the 40S ribosome. The eIF-3 complex specifically targets and initiates translation of a subset of mRNAs involved in cell proliferation. In addition to its role in the eIF-3 complex, also functions in protein ubiquitination and degradation. During mitosis required for regulating mitotic microtubule growth and kinetochore formation, and consequently is required for satisfying the spindle assembly checkpoint (SAC) during metaphase to prevent delays in mitotic progression. This is likely by promoting the ubiquitination and degradation of Klp67A, a kinesin-like protein that suppresses microtubule polymerization at plus ends. Acts in the COP9 signalosome (CSN) mediated regulation of cullin neddylation by promoting Cul1 and Cul3 neddylation and negatively regulating the CSN complex subunit CSN5. This is Eukaryotic translation initiation factor 3 subunit E from Drosophila melanogaster (Fruit fly).